A 315-amino-acid chain; its full sequence is Calumenin (315 aa).

The signal sequence occupies residues 1–19 (MDLRQFLMCLSLCTAFALS). At Ser-44 the chain carries Phosphoserine. Residue Tyr-47 is modified to Phosphotyrosine. Position 65 is a phosphothreonine (Thr-65). EF-hand domains lie at 68-103 (ESKE…AQKR), 104-139 (WIYE…YVLD), 151-186 (QMMV…EEYD), 188-223 (MKDI…HDGN), 229-264 (WVKT…SDYD), and 265-300 (HAEA…FVGS). Ser-69 carries the phosphoserine modification. 8 residues coordinate Ca(2+): Asp-81, Asp-83, Asp-85, Glu-92, Asp-117, Asn-119, Asp-121, and Glu-128. A glycan (N-linked (GlcNAc...) asparagine) is linked at Asn-131. Asp-164 contributes to the Ca(2+) binding site. N6-acetyllysine is present on Lys-165. Ca(2+)-binding residues include Asp-166, Asp-168, Glu-175, Asp-201, Asn-203, Asp-205, Glu-212, Asp-242, Asn-244, Asp-246, Lys-248, and Glu-253. Thr-254 is subject to Phosphothreonine. Residues Ser-261 and Ser-277 each carry the phosphoserine modification. Residues Asp-278, Asn-280, Asp-282, Lys-284, and Glu-289 each contribute to the Ca(2+) site. A Prevents secretion from ER motif is present at residues 312–315 (HDEF).

The protein belongs to the CREC family. Interacts with GGCX.

Its subcellular location is the endoplasmic reticulum membrane. The protein localises to the golgi apparatus. The protein resides in the secreted. It is found in the melanosome. It localises to the sarcoplasmic reticulum lumen. Its function is as follows. Involved in regulation of vitamin K-dependent carboxylation of multiple N-terminal glutamate residues. Seems to inhibit gamma-carboxylase GGCX. Binds 7 calcium ions with a low affinity. The chain is Calumenin (CALU) from Pongo abelii (Sumatran orangutan).